Here is a 401-residue protein sequence, read N- to C-terminus: Acetate kinase (401 aa).

Residue asparagine 9 coordinates Mg(2+). Lysine 16 provides a ligand contact to ATP. Arginine 88 contacts substrate. Catalysis depends on aspartate 147, which acts as the Proton donor/acceptor. ATP contacts are provided by residues 207 to 211 (HLGNG), 282 to 284 (DCR), and 333 to 337 (GIGEN). Residue glutamate 388 participates in Mg(2+) binding.

Belongs to the acetokinase family. In terms of assembly, homodimer. It depends on Mg(2+) as a cofactor. The cofactor is Mn(2+).

Its subcellular location is the cytoplasm. It carries out the reaction acetate + ATP = acetyl phosphate + ADP. Its pathway is metabolic intermediate biosynthesis; acetyl-CoA biosynthesis; acetyl-CoA from acetate: step 1/2. Its function is as follows. Catalyzes the formation of acetyl phosphate from acetate and ATP. Can also catalyze the reverse reaction. In Haemophilus influenzae (strain PittGG), this protein is Acetate kinase.